A 142-amino-acid polypeptide reads, in one-letter code: HTH-type transcriptional regulator MntR (142 aa).

The region spanning 1-63 (MPTPSMEDYI…YEKYRGLILT (63 aa)) is the HTH dtxR-type domain. 6 residues coordinate Mn(2+): aspartate 8, glutamate 11, histidine 77, glutamate 99, glutamate 102, and histidine 103.

This sequence belongs to the DtxR/MntR family. Homodimer.

Its subcellular location is the cytoplasm. With respect to regulation, DNA binding is strongly activated by Mn(2+). Central regulator of manganese homeostasis. This is HTH-type transcriptional regulator MntR from Listeria welshimeri serovar 6b (strain ATCC 35897 / DSM 20650 / CCUG 15529 / CIP 8149 / NCTC 11857 / SLCC 5334 / V8).